Reading from the N-terminus, the 418-residue chain is Metacaspase-2 (418 aa).

A disordered region spans residues 68-113 (PSPYTHAPHAPSPFNHAPPDSYPFTHAPPASSPFNHAPPGPPPPVH). A compositionally biased stretch (low complexity) spans 70 to 80 (PYTHAPHAPSP). Positions 103-112 (HAPPGPPPPV) are enriched in pro residues. Catalysis depends on residues histidine 200 and cysteine 256. Residues 385-406 (PDEEEEVNQAPQKTQEPQLSAN) form a disordered region. A compositionally biased stretch (polar residues) spans 393 to 405 (QAPQKTQEPQLSA).

The protein belongs to the peptidase C14B family.

In terms of biological role, acts as a negative regulator of oxidative stress cell death and hypersensitive cell death response mediated by immune response. Acts via indirect or direct regulation of AMC1 at postranscriptional level. This Arabidopsis thaliana (Mouse-ear cress) protein is Metacaspase-2 (AMC2).